Reading from the N-terminus, the 534-residue chain is CTP synthase (534 aa).

The tract at residues 1-266 (MKQKFIFVTG…DELIVARLGL (266 aa)) is amidoligase domain. A CTP-binding site is contributed by Ser-14. Ser-14 provides a ligand contact to UTP. Residues 15–20 (SIGKGL) and Asp-72 each bind ATP. Mg(2+) is bound by residues Asp-72 and Glu-140. Residues 147–149 (DIE), 187–192 (KSKPTQ), and Lys-223 each bind CTP. Residues 187-192 (KSKPTQ) and Lys-223 each bind UTP. The Glutamine amidotransferase type-1 domain maps to 291–534 (KIGVVGKYVD…HFVKASLKKK (244 aa)). Gly-353 contacts L-glutamine. Residue Cys-380 is the Nucleophile; for glutamine hydrolysis of the active site. L-glutamine-binding positions include 381–384 (FGMQ), Glu-404, and Arg-464. Catalysis depends on residues His-509 and Glu-511.

Belongs to the CTP synthase family. In terms of assembly, homotetramer.

It catalyses the reaction UTP + L-glutamine + ATP + H2O = CTP + L-glutamate + ADP + phosphate + 2 H(+). The enzyme catalyses L-glutamine + H2O = L-glutamate + NH4(+). It carries out the reaction UTP + NH4(+) + ATP = CTP + ADP + phosphate + 2 H(+). It functions in the pathway pyrimidine metabolism; CTP biosynthesis via de novo pathway; CTP from UDP: step 2/2. Allosterically activated by GTP, when glutamine is the substrate; GTP has no effect on the reaction when ammonia is the substrate. The allosteric effector GTP functions by stabilizing the protein conformation that binds the tetrahedral intermediate(s) formed during glutamine hydrolysis. Inhibited by the product CTP, via allosteric rather than competitive inhibition. Its function is as follows. Catalyzes the ATP-dependent amination of UTP to CTP with either L-glutamine or ammonia as the source of nitrogen. Regulates intracellular CTP levels through interactions with the four ribonucleotide triphosphates. The polypeptide is CTP synthase (Bdellovibrio bacteriovorus (strain ATCC 15356 / DSM 50701 / NCIMB 9529 / HD100)).